The chain runs to 383 residues: MQTWQLPEHIADVLPTNARQLESAREQLLALFRVHGYELVQPPLMEYAHSLLTHIDAGLSLKTILVTDRLSGRQLGIRADITPQVARIDAHLLSANQGINRLCYAGPVLHAQPDGLPNMREPLQAGAEMYGFADIRGDIELIDLMLKSMKIADMGKVLLSLGHIGIFRALSDAAHLDAGQSATLLALMQDKDTGSVEAQVKAWKLDGMWAKAFSLLPRLYGGREVLSDARGRLPDLSAVGGALDELQAVCDAFPDNEIHIDLSELRVDNYHTGLLYAAYAADFHDAVARGGRYDGLGGYFGRARPATGFSFDLRSFIGRLPAVERQPAVLVDAEDAEAAREAVEALREQGQCVVIDYGIGHNVSEELAGRLKKTDGVWQIVKR.

This sequence belongs to the class-II aminoacyl-tRNA synthetase family. HisZ subfamily. Heteromultimer composed of HisG and HisZ subunits.

It is found in the cytoplasm. Its pathway is amino-acid biosynthesis; L-histidine biosynthesis; L-histidine from 5-phospho-alpha-D-ribose 1-diphosphate: step 1/9. Functionally, required for the first step of histidine biosynthesis. May allow the feedback regulation of ATP phosphoribosyltransferase activity by histidine. This is ATP phosphoribosyltransferase regulatory subunit from Neisseria gonorrhoeae (strain NCCP11945).